Here is a 447-residue protein sequence, read N- to C-terminus: Chaperone protein dnaJ A7B, chloroplastic (447 aa).

The transit peptide at 1-86 (MALLQFGGTL…HRRSSRFIVR (86 aa)) directs the protein to the chloroplast. Positions 90-154 (DFYSTLGVSR…EKRSIYDKYG (65 aa)) constitute a J domain. The CR-type zinc-finger motif lies at 217 to 298 (GVEKEIEITR…CGGDGRVRKT (82 aa)). Residues Cys230, Cys233, Cys247, Cys250, Cys273, Cys276, Cys286, and Cys289 each coordinate Zn(2+). CXXCXGXG motif repeat units follow at residues 230–237 (CNTCDGTG), 247–254 (CKTCGGQG), 273–280 (CNTCGGTG), and 286–293 (CNTCGGDG).

It belongs to the DnaJ family. In terms of assembly, interacts with PCNA. As to expression, expressed in roots, stems, leaves and panicles.

Its subcellular location is the plastid. It is found in the chloroplast. In terms of biological role, plays pivotal roles in chloroplast development. Is essential for the regulation of chloroplast development and differentiation. This chain is Chaperone protein dnaJ A7B, chloroplastic, found in Oryza sativa subsp. japonica (Rice).